The primary structure comprises 763 residues: MTISPPEREAKVKATVDKNPVPTSFEKWGKPGHFDRTLAKGPKTTTWIWNLHANAHDFDSHTSDLEDISRKIFSAHFGHLAVIFIWLSGAYFHGARFSNFSGWLADPTHVKPSAQVVWPIFGQEILNGDVGGGFHGIQITSGLFQLWRASGYTNEFQLYVTAIGALVMAGLMLFAGWFHYHKAAPKLEWFQNVESMLNHHLAGLLGLGSLSWAGHQIHVSLPVNKLLDAIDAGEPLVLNGKTIASAADIPLPHEFLDVSLISQLFPGFEAGVKAFFTLNWSAYADFLTFKGGLNPVTGGLWLTDTAHHHLAIAVLFIVAGHMYRTNWGIGHSLKEILEAHKGPFTGQGHKGLYEILTTSWHAQLSINLAILGSISIIVAHHMYAMPPYPYLATDYPTMLSLFTHHIWIGGFLIVGAGAHAAIFMVRDYDPAKNVDNLLDRVLRHRDAIISHLNWVCIWLGFHSFGLYIHNDTMRALGRPQDMFSDSAIQLQPIFAQWIQNIHALAPGNTAPNALASVSQVFGGDVVAVGGKVAAAPIVLGTADFMVHHIHAFTIHVTALILLKGVLYARSSRLVPDKANLGFRFPCDGPGRGGTCQVSGWDHVFLGLFWMYNSLSIVIFHYSWKMQSDVWGSVLPDGSVAHIANGNFAQSALTINGWLRDFLWAQASQVITSYGSSTSAYGLLFLGAHFVWAFSLMFLFSGRGYWQELIESIVWAHNKLKVAPAIQPRALSIIQGRAVGVAHYLLGGIVTTWSFFLARIIAVG.

A run of 8 helical transmembrane segments spans residues I72–A95, L158–H181, L197–L221, T305–Y323, W360–Y383, L399–V425, A447–H469, and F544–L562. [4Fe-4S] cluster is bound by residues C586 and C595. Transmembrane regions (helical) follow at residues H602–W623 and T677–F699. H688 lines the chlorophyll a' pocket. Chlorophyll a contacts are provided by M696 and Y704. A phylloquinone-binding site is contributed by W705. Residues A737–A757 traverse the membrane as a helical segment.

It belongs to the PsaA/PsaB family. The PsaA/B heterodimer binds the P700 chlorophyll special pair and subsequent electron acceptors. PSI consists of a core antenna complex that captures photons, and an electron transfer chain that converts photonic excitation into a charge separation. The cyanobacterial PSI reaction center is composed of one copy each of PsaA,B,C,D,E,F,I,J,K,L,M and X, and forms trimeric complexes. The cofactor is PSI electron transfer chain: 5 chlorophyll a, 1 chlorophyll a', 2 phylloquinones and 3 4Fe-4S clusters. PSI core antenna: 90 chlorophyll a, 22 carotenoids, 3 phospholipids and 1 galactolipid. P700 is a chlorophyll a/chlorophyll a' dimer, A0 is one or more chlorophyll a, A1 is one or both phylloquinones and FX is a shared 4Fe-4S iron-sulfur center..

The protein resides in the cellular thylakoid membrane. It catalyses the reaction reduced [plastocyanin] + hnu + oxidized [2Fe-2S]-[ferredoxin] = oxidized [plastocyanin] + reduced [2Fe-2S]-[ferredoxin]. PsaA and PsaB bind P700, the primary electron donor of photosystem I (PSI), as well as the electron acceptors A0, A1 and FX. PSI is a plastocyanin/cytochrome c6-ferredoxin oxidoreductase, converting photonic excitation into a charge separation, which transfers an electron from the donor P700 chlorophyll pair to the spectroscopically characterized acceptors A0, A1, FX, FA and FB in turn. Oxidized P700 is reduced on the lumenal side of the thylakoid membrane by plastocyanin or cytochrome c6. The chain is Photosystem I P700 chlorophyll a apoprotein A1 from Synechococcus elongatus (strain ATCC 33912 / PCC 7942 / FACHB-805) (Anacystis nidulans R2).